A 504-amino-acid chain; its full sequence is Probable cytochrome P450 305a1 (504 aa).

Cysteine 450 is a binding site for heme.

Belongs to the cytochrome P450 family. The cofactor is heme.

The protein resides in the endoplasmic reticulum membrane. It is found in the microsome membrane. In terms of biological role, may be involved in the metabolism of insect hormones and in the breakdown of synthetic insecticides. The polypeptide is Probable cytochrome P450 305a1 (Cyp305a1) (Drosophila melanogaster (Fruit fly)).